Consider the following 313-residue polypeptide: Olfactory receptor 4M2 (313 aa).

The Extracellular portion of the chain corresponds to 1 to 25 (METANYTKVTEFVLTGLSQTPEVQL). A glycan (N-linked (GlcNAc...) asparagine) is linked at Asn5. A helical membrane pass occupies residues 26 to 49 (VLFVIFLSFYLFILPGNILIICTI). At 50-57 (SLDPHLTS) the chain is on the cytoplasmic side. The helical transmembrane segment at 58 to 79 (PMYFLLANLAFLDIWYSSITAP) threads the bilayer. Topologically, residues 80–100 (EMLIDFFVERKIISFDGCIAQ) are extracellular. Cys97 and Cys189 are joined by a disulfide. Residues 101 to 120 (LFFLHFAGASEMFLLTVMAF) traverse the membrane as a helical segment. At 121 to 139 (DLYTAICRPLHYATIMNQR) the chain is on the cytoplasmic side. The chain crosses the membrane as a helical span at residues 140–158 (LCCILVALSWRGGFIHSII). Over 159–195 (QVALIVRLPFCGPNELDSYFCDITQVVRIACANTFPE) the chain is Extracellular. A helical transmembrane segment spans residues 196 to 219 (ELVMICSSGLISVVCLIALLMSYA). At 220-237 (FLLALFKKLSGSGENTNR) the chain is on the cytoplasmic side. Residues 238 to 260 (AMSTCYSHITIVVLMFGPSIYIY) form a helical membrane-spanning segment. The Extracellular segment spans residues 261-271 (ARPFDSFSLDK). A helical membrane pass occupies residues 272–291 (VVSVFNTLIFPLRNPIIYTL). Residues 292 to 313 (RNKEVKAAMRKLVTKYILCKEK) lie on the Cytoplasmic side of the membrane.

Belongs to the G-protein coupled receptor 1 family.

The protein resides in the cell membrane. Functionally, odorant receptor. This is Olfactory receptor 4M2 (OR4M2) from Homo sapiens (Human).